We begin with the raw amino-acid sequence, 713 residues long: Major surface-labeled trophozoite antigen 417 (713 aa).

A signal peptide spans 1–17; it reads MFGRFLLAIVILQLART. The Extracellular portion of the chain corresponds to 18-679; that stretch reads ACTQEADDGK…KDSGSTNKSG (662 aa). N-linked (GlcNAc...) asparagine glycans are attached at residues Asn-289 and Asn-676. The helical transmembrane segment at 680 to 708 threads the bilayer; sequence LSTGAIAGISVAVIVVVGGLIGFLCWWFL. Topologically, residues 709-713 are cytoplasmic; the sequence is CRGKA.

It belongs to the Giardia variant surface protein family.

Its subcellular location is the cell membrane. In Giardia intestinalis (Giardia lamblia), this protein is Major surface-labeled trophozoite antigen 417 (TSA 417).